Reading from the N-terminus, the 213-residue chain is LexA repressor (213 aa).

The segment at residues 29 to 49 (VREICNAVGFKSTSTVHSYLE) is a DNA-binding region (H-T-H motif). Active-site for autocatalytic cleavage activity residues include serine 136 and lysine 173.

The protein belongs to the peptidase S24 family. As to quaternary structure, homodimer.

The catalysed reaction is Hydrolysis of Ala-|-Gly bond in repressor LexA.. Functionally, represses a number of genes involved in the response to DNA damage (SOS response), including recA and lexA. In the presence of single-stranded DNA, RecA interacts with LexA causing an autocatalytic cleavage which disrupts the DNA-binding part of LexA, leading to derepression of the SOS regulon and eventually DNA repair. In Acetivibrio thermocellus (strain ATCC 27405 / DSM 1237 / JCM 9322 / NBRC 103400 / NCIMB 10682 / NRRL B-4536 / VPI 7372) (Clostridium thermocellum), this protein is LexA repressor.